We begin with the raw amino-acid sequence, 345 residues long: NADPH dehydrogenase (345 aa).

23–26 is an FMN binding site; the sequence is SPMC. Tyr-28 serves as a coordination point for substrate. FMN-binding residues include Ala-60 and Gln-102. 164 to 167 lines the substrate pocket; sequence HGAH. Residues Arg-215 and 307-308 each bind FMN; that span reads GR.

It belongs to the NADH:flavin oxidoreductase/NADH oxidase family. NamA subfamily. In terms of assembly, homotetramer. It depends on FMN as a cofactor.

The catalysed reaction is A + NADPH + H(+) = AH2 + NADP(+). In terms of biological role, catalyzes the reduction of the double bond of an array of alpha,beta-unsaturated aldehydes and ketones. It also reduces the nitro group of nitroester and nitroaromatic compounds. It could have a role in detoxification processes. This Bacillus cereus (strain ATCC 10987 / NRS 248) protein is NADPH dehydrogenase.